The sequence spans 254 residues: 7-cyano-7-deazaguanine synthase (254 aa).

An ATP-binding site is contributed by 30–40 (YSGGQDSATCL). Zn(2+) contacts are provided by cysteine 218, cysteine 233, cysteine 236, and cysteine 239.

The protein belongs to the QueC family. Zn(2+) serves as cofactor.

The enzyme catalyses 7-carboxy-7-deazaguanine + NH4(+) + ATP = 7-cyano-7-deazaguanine + ADP + phosphate + H2O + H(+). It participates in purine metabolism; 7-cyano-7-deazaguanine biosynthesis. Its function is as follows. Catalyzes the ATP-dependent conversion of 7-carboxy-7-deazaguanine (CDG) to 7-cyano-7-deazaguanine (preQ(0)). This chain is 7-cyano-7-deazaguanine synthase, found in Zymomonas mobilis subsp. mobilis (strain ATCC 31821 / ZM4 / CP4).